We begin with the raw amino-acid sequence, 1483 residues long: Protein ORF C (1483 aa).

8 disordered regions span residues leucine 135–proline 268, valine 306–valine 334, arginine 383–histidine 506, serine 518–arginine 653, arginine 680–serine 911, serine 949–serine 976, alanine 1013–isoleucine 1061, and phenylalanine 1089–aspartate 1299. Over residues alanine 141–arginine 153 the composition is skewed to low complexity. Positions aspartate 157–glutamine 170 are enriched in polar residues. Low complexity-rich tracts occupy residues alanine 190–glutamine 206 and alanine 220–threonine 251. Residues arginine 252–glutamine 264 show a composition bias toward polar residues. Composition is skewed to low complexity over residues serine 424–threonine 449, serine 474–serine 483, and threonine 529–arginine 541. Residues glycine 596 to leucine 607 are compositionally biased toward polar residues. Residues serine 609–glutamine 621 show a composition bias toward basic and acidic residues. Polar residues predominate over residues glutamine 622–glycine 640. Basic and acidic residues predominate over residues arginine 680–histidine 689. The span at threonine 699–phenylalanine 710 shows a compositional bias: polar residues. Over residues serine 740–proline 749 the composition is skewed to basic and acidic residues. Residues glycine 754–serine 774 are compositionally biased toward low complexity. Residues asparagine 841 to arginine 876 show a composition bias toward polar residues. Residues aspartate 894–serine 909 show a composition bias toward low complexity. Composition is skewed to polar residues over residues glycine 1096–proline 1109 and glycine 1116–valine 1125. Positions serine 1148–alanine 1158 are enriched in low complexity. The segment covering glutamine 1188–leucine 1202 has biased composition (polar residues). 2 stretches are compositionally biased toward low complexity: residues serine 1204–serine 1226 and lysine 1233–serine 1251. Residues alanine 1258–alanine 1276 are compositionally biased toward polar residues. Low complexity predominate over residues lysine 1284–aspartate 1299. Residues alanine 1408 to aspartate 1438 are a coiled coil. The disordered stretch occupies residues aspartate 1454 to serine 1483.

The protein is Protein ORF C of Elephantid herpesvirus 1 (isolate Asian elephant/Berlin/Kiba/1998) (EIHV-1).